Consider the following 359-residue polypeptide: Methylthioribose-1-phosphate isomerase (359 aa).

The active-site Proton donor is the Asp-235.

This sequence belongs to the eIF-2B alpha/beta/delta subunits family. MtnA subfamily.

The protein localises to the cytoplasm. Its subcellular location is the nucleus. The enzyme catalyses 5-(methylsulfanyl)-alpha-D-ribose 1-phosphate = 5-(methylsulfanyl)-D-ribulose 1-phosphate. It functions in the pathway amino-acid biosynthesis; L-methionine biosynthesis via salvage pathway; L-methionine from S-methyl-5-thio-alpha-D-ribose 1-phosphate: step 1/6. Catalyzes the interconversion of methylthioribose-1-phosphate (MTR-1-P) into methylthioribulose-1-phosphate (MTRu-1-P). This chain is Methylthioribose-1-phosphate isomerase (mri1), found in Schizosaccharomyces pombe (strain 972 / ATCC 24843) (Fission yeast).